Consider the following 350-residue polypeptide: S-adenosylmethionine:tRNA ribosyltransferase-isomerase (350 aa).

This sequence belongs to the QueA family. As to quaternary structure, monomer.

The protein localises to the cytoplasm. The enzyme catalyses 7-aminomethyl-7-carbaguanosine(34) in tRNA + S-adenosyl-L-methionine = epoxyqueuosine(34) in tRNA + adenine + L-methionine + 2 H(+). It functions in the pathway tRNA modification; tRNA-queuosine biosynthesis. Its function is as follows. Transfers and isomerizes the ribose moiety from AdoMet to the 7-aminomethyl group of 7-deazaguanine (preQ1-tRNA) to give epoxyqueuosine (oQ-tRNA). This chain is S-adenosylmethionine:tRNA ribosyltransferase-isomerase, found in Vibrio parahaemolyticus serotype O3:K6 (strain RIMD 2210633).